A 113-amino-acid chain; its full sequence is Prostate and testis expressed protein 2 (113 aa).

An N-terminal signal peptide occupies residues 1-26 (MLVLFLLGTVFLLCPYWGELHDPIKA). The UPAR/Ly6 domain occupies 29–110 (IMCYECKKYH…CDHSNYCNLP (82 aa)). Intrachain disulfides connect cysteine 31–cysteine 57, cysteine 34–cysteine 42, cysteine 49–cysteine 80, and cysteine 84–cysteine 101.

Belongs to the PATE family. Isoform 1 and isoform 2 are expressed in prostate and testis. Isoform 2 is expressed in male and female brain at equivalent levels, in particular in cerebellum, cerebral cortex, corpus callosum, occipital, parrietal and temporal lobes, and pons, but not in amygdala, cerebral peduncle, hippocampus and thalamus.

The protein localises to the secreted. This chain is Prostate and testis expressed protein 2 (PATE2), found in Homo sapiens (Human).